A 1123-amino-acid polypeptide reads, in one-letter code: Phytochrome A (1123 aa).

The span at 1-14 (MSSSRPSQSSTTSS) shows a compositional bias: low complexity. The disordered stretch occupies residues 1-20 (MSSSRPSQSSTTSSRSKHSA). Positions 218-401 (SMERLCDTMV…VFAILVNKEL (184 aa)) constitute a GAF domain. Residue cysteine 323 participates in phytochromobilin binding. The region spanning 617-687 (VTAEMVRLIE…KMLELALQGQ (71 aa)) is the PAS 1 domain. In terms of domain architecture, PAC spans 690-746 (RNVEFEIKTHGPSRDSSPISLIVNACASKDVRDSVVGVCFIAQDITGQKSIMDKFTR). The PAS 2 domain occupies 747–821 (IEGDYRAIIQ…KNQEAFVNFG (75 aa)). The region spanning 901–1118 (YIRRQIRNPL…TFIISVELAV (218 aa)) is the Histidine kinase domain.

This sequence belongs to the phytochrome family. In terms of assembly, homodimer. Contains one covalently linked phytochromobilin chromophore.

Its function is as follows. Regulatory photoreceptor which exists in two forms that are reversibly interconvertible by light: the Pr form that absorbs maximally in the red region of the spectrum and the Pfr form that absorbs maximally in the far-red region. Photoconversion of Pr to Pfr induces an array of morphogenic responses, whereas reconversion of Pfr to Pr cancels the induction of those responses. Pfr controls the expression of a number of nuclear genes including those encoding the small subunit of ribulose-bisphosphate carboxylase, chlorophyll A/B binding protein, protochlorophyllide reductase, rRNA, etc. It also controls the expression of its own gene(s) in a negative feedback fashion. This Solanum tuberosum (Potato) protein is Phytochrome A (PHYA).